Consider the following 93-residue polypeptide: Beta-defensin 128 (93 aa).

A signal peptide spans 1–18 (MKLFLVLIILLFEVLTDG). Intrachain disulfides connect C24–C52, C32–C46, and C36–C53.

Belongs to the beta-defensin family.

The protein localises to the secreted. Has antibacterial activity. The polypeptide is Beta-defensin 128 (DEFB128) (Macaca fascicularis (Crab-eating macaque)).